We begin with the raw amino-acid sequence, 175 residues long: Adenylate kinase isoenzyme 6 homolog (175 aa).

ATP contacts are provided by Gly17, Gly19, Lys20, Thr21, and Ser22. Residues 37–60 (DISSAVKEKELHDGWDSEFQCYIL) form an NMPbind region. Residues 112–122 (KRNYNQHKITN) form an LID region. Arg113 is a binding site for ATP.

Belongs to the adenylate kinase family. AK6 subfamily. As to quaternary structure, monomer and homodimer. Interacts with small ribosomal subunit protein uS11. Not a structural component of 43S pre-ribosomes, but transiently interacts with them by binding to uS11.

It localises to the cytoplasm. The protein localises to the nucleus. The catalysed reaction is AMP + ATP = 2 ADP. It carries out the reaction ATP + H2O = ADP + phosphate + H(+). Its function is as follows. Broad-specificity nucleoside monophosphate (NMP) kinase that catalyzes the reversible transfer of the terminal phosphate group between nucleoside triphosphates and monophosphates. Also has ATPase activity. Involved in the late cytoplasmic maturation steps of the 40S ribosomal particles, specifically 18S rRNA maturation. While NMP activity is not required for ribosome maturation, ATPase activity is. Associates transiently with small ribosomal subunit protein uS11. ATP hydrolysis breaks the interaction with uS11. May temporarily remove uS11 from the ribosome to enable a conformational change of the ribosomal RNA that is needed for the final maturation step of the small ribosomal subunit. Its NMP activity may have a role in nuclear energy homeostasis. The sequence is that of Adenylate kinase isoenzyme 6 homolog from Dictyostelium discoideum (Social amoeba).